Reading from the N-terminus, the 498-residue chain is Hexokinase-3 (498 aa).

The helical transmembrane segment at 4-24 (VAVAFAAVAVVAACSVAAVMV) threads the bilayer. The 460-residue stretch at 35-494 (RTVVEILKEL…SSIGSALLVA (460 aa)) folds into the Hexokinase domain. A hexokinase small subdomain region spans residues 90-227 (TGREKGTYYA…GLDMHVAALV (138 aa)). 2 residues coordinate ADP: G104 and T105. The D-glucose site is built by T193, K194, N228, and D229. The interval 228–483 (NDTVGALSLG…QYVVVKAMED (256 aa)) is hexokinase large subdomain. T252 is a binding site for ADP. The D-glucose site is built by N255, E283, and E314. Residue G448 participates in ADP binding.

Belongs to the hexokinase family. In terms of tissue distribution, expressed in roots, emerging lateral roots, vascular tissues of cotyledons, roots and leaves, root and shoot meristems, anther filaments and funiculi of mature seeds.

Its subcellular location is the mitochondrion outer membrane. The catalysed reaction is a D-hexose + ATP = a D-hexose 6-phosphate + ADP + H(+). It catalyses the reaction D-fructose + ATP = D-fructose 6-phosphate + ADP + H(+). The enzyme catalyses D-glucose + ATP = D-glucose 6-phosphate + ADP + H(+). It functions in the pathway carbohydrate metabolism; hexose metabolism. Its pathway is carbohydrate degradation; glycolysis; D-glyceraldehyde 3-phosphate and glycerone phosphate from D-glucose: step 1/4. Its function is as follows. Fructose and glucose phosphorylating enzyme. May be involved in the phosphorylation of glucose during the export from mitochondrion to cytosol. Plays a role in plant growth and development, perhaps by mediating cross-talk between glucose and hormone response pathways. Involved in root hair cell development by mediating certain aspects of cross talk between glucose and ethylene response pathways. The polypeptide is Hexokinase-3 (Arabidopsis thaliana (Mouse-ear cress)).